A 467-amino-acid polypeptide reads, in one-letter code: F-box only protein 6 (467 aa).

The F-box domain maps to 114-163; that stretch reads QEIWQEFPQDLFEDVVSRLPMATFFQFRAVCRKWNALIDSDSFSRCFTEL. Kelch repeat units lie at residues 163 to 211, 252 to 305, and 406 to 456; these read LPQT…MASA, GMTL…NFKS, and CLGN…IACG.

This Arabidopsis thaliana (Mouse-ear cress) protein is F-box only protein 6 (FBX6).